Reading from the N-terminus, the 287-residue chain is Protein PXR1 (287 aa).

Residues 25 to 72 (TSRFGHLQLEKFGWKPGMGLGMSPTSSHKTHIKVSIKDDNLGLGAKIK) enclose the G-patch domain. Residues 143–155 (LKSYSNDKKRSRD) show a composition bias toward basic and acidic residues. Residues 143 to 254 (LKSYSNDKKR…TTASNIPSTV (112 aa)) are disordered. Residues 163–190 (SKNKSKKQKKDKKDKKDKKDKKDKKDKK) are compositionally biased toward basic residues. Positions 191–200 (DKKDKTEKKE) are enriched in basic and acidic residues. The segment covering 201–220 (KKEKKEKKEKKEKKDKKDKK) has biased composition (basic residues). Residues 221 to 230 (DKKDKIDKKD) are compositionally biased toward basic and acidic residues. The segment covering 239-251 (NNIEVSTTASNIP) has biased composition (polar residues).

This sequence belongs to the PINX1 family.

The protein resides in the nucleus. Its subcellular location is the nucleolus. Involved in rRNA-processing at A0, A1 and A2 sites and negatively regulates telomerase. The polypeptide is Protein PXR1 (PXR1) (Vanderwaltozyma polyspora (strain ATCC 22028 / DSM 70294 / BCRC 21397 / CBS 2163 / NBRC 10782 / NRRL Y-8283 / UCD 57-17) (Kluyveromyces polysporus)).